The following is a 59-amino-acid chain: Venom protein 37.1 (59 aa).

The signal sequence occupies residues 1–18 (MVSTLMIASVKLRLYCTA).

The protein belongs to the non-disulfide-bridged peptide (NDBP) superfamily. Long chain multifunctional peptide (group 2) family. Expressed by the venom gland.

It localises to the secreted. This chain is Venom protein 37.1, found in Lychas mucronatus (Chinese swimming scorpion).